The primary structure comprises 673 residues: DNA ligase (673 aa).

NAD(+) contacts are provided by residues 38–42, 87–88, and Glu-119; these read DSVYD and SL. Lys-121 (N6-AMP-lysine intermediate) is an active-site residue. NAD(+) is bound by residues Arg-142, Glu-179, Lys-296, and Lys-320. Zn(2+)-binding residues include Cys-414, Cys-417, Cys-432, and Cys-438. A BRCT domain is found at 595-673; the sequence is VVKSEIAGKT…EEAFLKLLKS (79 aa).

Belongs to the NAD-dependent DNA ligase family. LigA subfamily. Mg(2+) is required as a cofactor. The cofactor is Mn(2+).

It carries out the reaction NAD(+) + (deoxyribonucleotide)n-3'-hydroxyl + 5'-phospho-(deoxyribonucleotide)m = (deoxyribonucleotide)n+m + AMP + beta-nicotinamide D-nucleotide.. Its function is as follows. DNA ligase that catalyzes the formation of phosphodiester linkages between 5'-phosphoryl and 3'-hydroxyl groups in double-stranded DNA using NAD as a coenzyme and as the energy source for the reaction. It is essential for DNA replication and repair of damaged DNA. The protein is DNA ligase of Coxiella burnetii (strain RSA 493 / Nine Mile phase I).